Consider the following 377-residue polypeptide: Citrate synthase (377 aa).

Catalysis depends on residues His258 and Asp313.

This sequence belongs to the citrate synthase family. Homodimer. Post-translationally, the N-terminus is blocked by acetylation.

It carries out the reaction oxaloacetate + acetyl-CoA + H2O = citrate + CoA + H(+). It participates in carbohydrate metabolism; tricarboxylic acid cycle; isocitrate from oxaloacetate: step 1/2. Its activity is regulated as follows. Allosterically inhibited by NADH. This chain is Citrate synthase (gltA), found in Saccharolobus solfataricus (strain ATCC 35092 / DSM 1617 / JCM 11322 / P2) (Sulfolobus solfataricus).